We begin with the raw amino-acid sequence, 61 residues long: UPF0337 protein LMOf2365_2190 (61 aa).

Positions 1–61 (MSEDKGMKDK…TGDAKKKLSE (61 aa)) are disordered.

Belongs to the UPF0337 (CsbD) family.

The protein is UPF0337 protein LMOf2365_2190 of Listeria monocytogenes serotype 4b (strain F2365).